Consider the following 115-residue polypeptide: DNA-directed RNA polymerase II subunit RPB11-b1 (115 aa).

This sequence belongs to the archaeal Rpo11/eukaryotic RPB11/RPC19 RNA polymerase subunit family. Component of the RNA polymerase II (Pol II) complex consisting of 12 subunits. In terms of tissue distribution, ubiquitously expressed.

It localises to the nucleus. In terms of biological role, DNA-dependent RNA polymerase catalyzes the transcription of DNA into RNA using the four ribonucleoside triphosphates as substrates. Component of RNA polymerase II which synthesizes mRNA precursors and many functional non-coding RNAs. Pol II is the central component of the basal RNA polymerase II transcription machinery. It is composed of mobile elements that move relative to each other. RPB11 is part of the core element with the central large cleft. This is DNA-directed RNA polymerase II subunit RPB11-b1 (POLR2J2) from Homo sapiens (Human).